A 372-amino-acid chain; its full sequence is N-methyl-L-tryptophan oxidase (372 aa).

An FAD-binding site is contributed by 4 to 34 (DLIIIGSGSVGAAAGYYATRAGLNVLMTDAH). C308 carries the S-8alpha-FAD cysteine modification.

This sequence belongs to the MSOX/MTOX family. MTOX subfamily. As to quaternary structure, monomer. FAD serves as cofactor.

The enzyme catalyses N(alpha)-methyl-L-tryptophan + O2 + H2O = L-tryptophan + formaldehyde + H2O2. Catalyzes the oxidative demethylation of N-methyl-L-tryptophan. The polypeptide is N-methyl-L-tryptophan oxidase (Escherichia coli O9:H4 (strain HS)).